The chain runs to 252 residues: MSEPNSDHGAGAAVGETRPLYSRVLLKLGGEMFGGGAVGLDPDVVHLVARQIAEVVRSGVQVAVVIGGGNFFRGAQLQQRGMERTRSDYMGMLGTVMNSLALQDFLEKEGIDTRVQTAITMGQVAEPYIPLRAVRHLEKGRVVIFGAGMGLPYFSTDTTAAQRALEIGAEVVLMAKAVDGVYTADPRKDPDAQLLTAITHREVIDRGLAVADATAFSLCMDNGMPILVFNLLVDGNIARAVAGEKIGTLVTT.

27–30 provides a ligand contact to ATP; sequence KLGG. Gly-68 lines the UMP pocket. Residues Gly-69 and Arg-73 each contribute to the ATP site. UMP is bound by residues Asp-88 and 149–156; that span reads MGLPYFST. ATP-binding residues include Tyr-182 and Asp-185.

It belongs to the UMP kinase family. As to quaternary structure, homohexamer.

It localises to the cytoplasm. It carries out the reaction UMP + ATP = UDP + ADP. The protein operates within pyrimidine metabolism; CTP biosynthesis via de novo pathway; UDP from UMP (UMPK route): step 1/1. Inhibited by UTP. Catalyzes the reversible phosphorylation of UMP to UDP. This is Uridylate kinase from Mycobacterium sp. (strain JLS).